The primary structure comprises 465 residues: MPKKVKPTGDENEEESVPCKQVKEELPNTLSVLNFDSPSSFFESLISPIKVETFFKEFWEQKPLLIQRDDPSLAAYYQSLFSLSDLRSLCSQGLYYGRDVNVCRCIGGKKKVLNKDGKAQFLQLRKDFDQKRATIQFHQPQRFKDELWRIQEKLECYFGSLVGSNVYMTPAGSQGLPPHYDDVEVFILQLEGRKRWRLYSPTVPLAREYSVEPEDRIGTPTHDFLLKPGDLLYFPRGTIHQAETPSGLAHSIHLTISTYQNNSWGDYLLDSISGLVFDIAKEDVALRTGMPRRMLMNVETPADVTRKLSGFLRTLADQLEGRKELLSSDMKKDFVMHRLPPFCVGNGTESMNPGGKLPRLNSIVRLQFKDHIVLTVGPDQNQSDEAQQKVVYIYHSLKNERQTHMMGKEVETEIYGLRFPLSYVDALKQIWCGSPVRVKDLKLGTDEEKENLAVSLWTECLVHVL.

The 133-residue stretch at 139–271 (QPQRFKDELW…NSWGDYLLDS (133 aa)) folds into the JmjC domain. Residues His-179, Asp-181, and His-240 each contribute to the Fe cation site. Ser-309 is subject to Phosphoserine.

This sequence belongs to the ROX family. MINA53 subfamily. Requires Fe(2+) as cofactor.

It localises to the nucleus. Its subcellular location is the nucleolus. The enzyme catalyses L-histidyl-[ribosomal protein uL15] + 2-oxoglutarate + O2 = (3S)-3-hydroxy-L-histidyl-[ribosomal protein uL15] + succinate + CO2. It carries out the reaction L-histidyl-[protein] + 2-oxoglutarate + O2 = (3S)-3-hydroxy-L-histidyl-[protein] + succinate + CO2. Functionally, oxygenase that can act as both a histone lysine demethylase and a ribosomal histidine hydroxylase. Is involved in the demethylation of trimethylated 'Lys-9' on histone H3 (H3K9me3), leading to an increase in ribosomal RNA expression. Also catalyzes the hydroxylation of 60S ribosomal protein L27a on 'His-39'. May play an important role in cell growth and survival. May be involved in ribosome biogenesis, most likely during the assembly process of pre-ribosomal particles. The protein is Ribosomal oxygenase 2 of Rattus norvegicus (Rat).